Consider the following 89-residue polypeptide: Small ribosomal subunit protein uS15 (89 aa).

Belongs to the universal ribosomal protein uS15 family. In terms of assembly, part of the 30S ribosomal subunit. Forms a bridge to the 50S subunit in the 70S ribosome, contacting the 23S rRNA.

One of the primary rRNA binding proteins, it binds directly to 16S rRNA where it helps nucleate assembly of the platform of the 30S subunit by binding and bridging several RNA helices of the 16S rRNA. In terms of biological role, forms an intersubunit bridge (bridge B4) with the 23S rRNA of the 50S subunit in the ribosome. The polypeptide is Small ribosomal subunit protein uS15 (Anoxybacillus flavithermus (strain DSM 21510 / WK1)).